A 299-amino-acid polypeptide reads, in one-letter code: DNA-binding transcriptional activator HetR (299 aa).

Ser152 is an active-site residue.

Belongs to the peptidase S48 family. Homodimer; disulfide-linked.

In terms of biological role, controls heterocyst differentiation. Dimerization is required for DNA-binding. Has both a protease and a DNA-binding activity. Increased expression leads to more heterocysts than usual. The polypeptide is DNA-binding transcriptional activator HetR (Nostoc punctiforme (strain ATCC 29133 / PCC 73102)).